The chain runs to 416 residues: L-lysine 2,3-aminomutase (416 aa).

One can recognise a Radical SAM core domain in the interval 111–322 (HRYPDRVLLL…EGLRGHTSGY (212 aa)). 3 residues coordinate [4Fe-4S] cluster: cysteine 125, cysteine 129, and cysteine 132. Cysteine 268 contributes to the Zn(2+) binding site. The residue at position 337 (lysine 337) is an N6-(pyridoxal phosphate)lysine. Residues cysteine 375, cysteine 377, and cysteine 380 each contribute to the Zn(2+) site.

This sequence belongs to the radical SAM superfamily. KamA family. As to quaternary structure, homohexamer; trimer of dimers. Forms a homotetramer in crystal. It depends on [4Fe-4S] cluster as a cofactor. Pyridoxal 5'-phosphate serves as cofactor. Requires Co(2+) as cofactor. The cofactor is Zn(2+).

The catalysed reaction is L-lysine = (3S)-3,6-diaminohexanoate. It participates in amino-acid degradation; L-lysine degradation via acetate pathway. Its activity is regulated as follows. The enzyme is activated by S-adenosyl-methionine. Activity is dependent on the levels of Fe(2+), S(2-) and Co(2+). Activity is stimulated by addition of EDTA. S-adenosylhomocysteine competitively inhibits the activity whereas 5'-methylthioadenosine is not inhibitory in the presence of S-adenosylmethionine. Competitively inhibited by 4-thialysine. Inhibited by sodium borohydride (1 mM) when added with 2 mM dithionate. Moderately inhibited by beta-mercaptoethanol (30 mM) along with dithionate. Higher concentrations of Fe(2+) partially inhibit the activity and Co(2+) at 1 mM is a strong inhibitor. Hydroxylamine, isonicotinic acid hydrazide inhibit effectively, in addition, hydrazine, D-penicillamine and D-cycloserine are also inhibitory at high concentrations. Its function is as follows. Catalyzes the interconversion of L-alpha-lysine and L-beta-lysine. The sequence is that of L-lysine 2,3-aminomutase (kamA) from Clostridium subterminale.